The following is a 174-amino-acid chain: ATP synthase subunit delta (174 aa).

The protein belongs to the ATPase delta chain family. As to quaternary structure, F-type ATPases have 2 components, F(1) - the catalytic core - and F(0) - the membrane proton channel. F(1) has five subunits: alpha(3), beta(3), gamma(1), delta(1), epsilon(1). F(0) has three main subunits: a(1), b(2) and c(10-14). The alpha and beta chains form an alternating ring which encloses part of the gamma chain. F(1) is attached to F(0) by a central stalk formed by the gamma and epsilon chains, while a peripheral stalk is formed by the delta and b chains.

It is found in the cell inner membrane. Its function is as follows. F(1)F(0) ATP synthase produces ATP from ADP in the presence of a proton or sodium gradient. F-type ATPases consist of two structural domains, F(1) containing the extramembraneous catalytic core and F(0) containing the membrane proton channel, linked together by a central stalk and a peripheral stalk. During catalysis, ATP synthesis in the catalytic domain of F(1) is coupled via a rotary mechanism of the central stalk subunits to proton translocation. Functionally, this protein is part of the stalk that links CF(0) to CF(1). It either transmits conformational changes from CF(0) to CF(1) or is implicated in proton conduction. The sequence is that of ATP synthase subunit delta from Helicobacter hepaticus (strain ATCC 51449 / 3B1).